The following is a 340-amino-acid chain: NADH-quinone oxidoreductase subunit H (340 aa).

The next 8 membrane-spanning stretches (helical) occupy residues 4–24 (TIGI…PLLI), 78–98 (YLFV…WAVI), 113–133 (VLYL…AGWA), 151–171 (VSYE…AGSM), 184–204 (MLHW…ISGI), 244–264 (SMIL…LSPF), 273–293 (IFFI…FLFV), and 316–336 (VLIP…VAHV).

It belongs to the complex I subunit 1 family. In terms of assembly, NDH-1 is composed of 14 different subunits. Subunits NuoA, H, J, K, L, M, N constitute the membrane sector of the complex.

The protein localises to the cell inner membrane. The enzyme catalyses a quinone + NADH + 5 H(+)(in) = a quinol + NAD(+) + 4 H(+)(out). NDH-1 shuttles electrons from NADH, via FMN and iron-sulfur (Fe-S) centers, to quinones in the respiratory chain. The immediate electron acceptor for the enzyme in this species is believed to be ubiquinone. Couples the redox reaction to proton translocation (for every two electrons transferred, four hydrogen ions are translocated across the cytoplasmic membrane), and thus conserves the redox energy in a proton gradient. This subunit may bind ubiquinone. In Legionella pneumophila subsp. pneumophila (strain Philadelphia 1 / ATCC 33152 / DSM 7513), this protein is NADH-quinone oxidoreductase subunit H.